We begin with the raw amino-acid sequence, 30 residues long: Cycloviolin-D (30 aa).

Residues 1–30 (GFPCGESCVFIPCISAAIGCSCKNKVCYRN) constitute a cross-link (cyclopeptide (Gly-Asn)). Cystine bridges form between Cys4–Cys20, Cys8–Cys22, and Cys13–Cys27.

This is a cyclic peptide.

Functionally, probably participates in a plant defense mechanism. Has anti-HIV activity. In Leonia cymosa (Sacha uba), this protein is Cycloviolin-D.